Consider the following 215-residue polypeptide: Guanylate kinase (215 aa).

Residues 9–187 (GTLYIVSAPS…ALDELSCLVH (179 aa)) enclose the Guanylate kinase-like domain. Position 16 to 23 (16 to 23 (APSGAGKT)) interacts with ATP.

The protein belongs to the guanylate kinase family.

The protein resides in the cytoplasm. The catalysed reaction is GMP + ATP = GDP + ADP. Its function is as follows. Essential for recycling GMP and indirectly, cGMP. This is Guanylate kinase from Chromohalobacter salexigens (strain ATCC BAA-138 / DSM 3043 / CIP 106854 / NCIMB 13768 / 1H11).